We begin with the raw amino-acid sequence, 352 residues long: UDP-N-acetylglucosamine--N-acetylmuramyl-(pentapeptide) pyrophosphoryl-undecaprenol N-acetylglucosamine transferase (352 aa).

UDP-N-acetyl-alpha-D-glucosamine is bound by residues 14–16 (TGG), Asn124, Arg164, Ser185, and Gln285.

This sequence belongs to the glycosyltransferase 28 family. MurG subfamily.

The protein localises to the cell inner membrane. It carries out the reaction di-trans,octa-cis-undecaprenyl diphospho-N-acetyl-alpha-D-muramoyl-L-alanyl-D-glutamyl-meso-2,6-diaminopimeloyl-D-alanyl-D-alanine + UDP-N-acetyl-alpha-D-glucosamine = di-trans,octa-cis-undecaprenyl diphospho-[N-acetyl-alpha-D-glucosaminyl-(1-&gt;4)]-N-acetyl-alpha-D-muramoyl-L-alanyl-D-glutamyl-meso-2,6-diaminopimeloyl-D-alanyl-D-alanine + UDP + H(+). The protein operates within cell wall biogenesis; peptidoglycan biosynthesis. Cell wall formation. Catalyzes the transfer of a GlcNAc subunit on undecaprenyl-pyrophosphoryl-MurNAc-pentapeptide (lipid intermediate I) to form undecaprenyl-pyrophosphoryl-MurNAc-(pentapeptide)GlcNAc (lipid intermediate II). This is UDP-N-acetylglucosamine--N-acetylmuramyl-(pentapeptide) pyrophosphoryl-undecaprenol N-acetylglucosamine transferase from Chlamydia trachomatis serovar L2 (strain ATCC VR-902B / DSM 19102 / 434/Bu).